We begin with the raw amino-acid sequence, 291 residues long: NAD kinase (291 aa).

Catalysis depends on Asp-72, which acts as the Proton acceptor. NAD(+) contacts are provided by residues 72–73, 146–147, Arg-157, Arg-174, Asp-176, 187–192, and Gln-247; these read DG, ND, and TAYSLS.

This sequence belongs to the NAD kinase family. The cofactor is a divalent metal cation.

The protein localises to the cytoplasm. The enzyme catalyses NAD(+) + ATP = ADP + NADP(+) + H(+). Its function is as follows. Involved in the regulation of the intracellular balance of NAD and NADP, and is a key enzyme in the biosynthesis of NADP. Catalyzes specifically the phosphorylation on 2'-hydroxyl of the adenosine moiety of NAD to yield NADP. The protein is NAD kinase of Hydrogenovibrio crunogenus (strain DSM 25203 / XCL-2) (Thiomicrospira crunogena).